A 455-amino-acid polypeptide reads, in one-letter code: Keratin, type I cuticular Ha5 (455 aa).

The head stretch occupies residues 1–97; it reads MASKCLKAGF…FGEGILTGNE (97 aa). Residues 97-408 form the IF rod domain; the sequence is EKETMQSLND…GLLESEDSKL (312 aa). A coil 1A region spans residues 98–132; that stretch reads KETMQSLNDRLAGYLEKVRQLEQENASLESRIREW. The segment at 133–143 is linker 1; the sequence is CEQQVPYMCPD. The coil 1B stretch occupies residues 144–244; the sequence is YQSYFRTIEE…HEEEVNSLRC (101 aa). The interval 245 to 260 is linker 12; that stretch reads QLGDRLNVEVDAAPPV. Positions 261–404 are coil 2; sequence DLNRVLEEMR…NTYRGLLESE (144 aa). Residues 405-455 form a tail region; it reads DSKLPCNPCAPDYSPSKSCLPCLPAASCGPSAARTNCSPRPICVPCPGGRF.

Belongs to the intermediate filament family. As to expression, early expression in the hair follicle, mainly found in supramatricial cells and lowermost cortical cells of the hair bulb.

The protein is Keratin, type I cuticular Ha5 (KRT35) of Homo sapiens (Human).